Reading from the N-terminus, the 307-residue chain is Cyclin-dependent kinase 5 activator 1 (307 aa).

Residue G2 is the site of N-myristoyl glycine attachment. S8 carries the post-translational modification Phosphoserine; by CDK5. Positions 97-135 (TFAQPPPAQPPAPPASQLSGSQTGVSSSVKKAPHPAVSS) are disordered. Over residues 100 to 110 (QPPPAQPPAPP) the composition is skewed to pro residues. Residues 112–125 (SQLSGSQTGVSSSV) show a composition bias toward polar residues. T138 bears the Phosphothreonine; by CDK5 mark.

Belongs to the cyclin-dependent kinase 5 activator family. As to quaternary structure, heterodimer composed of a catalytic subunit CDK5 and a regulatory subunit CDK5R1 (p25) and macromolecular complex composed of at least CDK5, CDK5R1 (p35) and CDK5RAP1 or CDK5RAP2 or CDK5RAP3. Only the heterodimer shows kinase activity. Interacts with EPHA4 and NGEF; may mediate the activation of NGEF by EPHA4. Interacts with RASGRF2. The complex p35/CDK5 interacts with CLOCK. In terms of processing, the p35 form is proteolytically cleaved by calpain, giving rise to the p25 form. P35 has a 5 to 10 fold shorter half-life compared to p25. The conversion results in deregulation of the CDK5 kinase: p25/CDK5 kinase displays an increased and altered tau phosphorylation in comparison to the p35/CDK5 kinase in vivo. Myristoylated. A proper myristoylation signal is essential for the proper distribution of p35. Post-translationally, phosphorylation at Ser-8 and Thr-138 by CDK5 prevents calpain-mediated proteolysis. In terms of processing, ubiquitinated, leading to its degradation: degradation of p35 by proteasome results in down-regulation of CDK5 activity. During this process, CDK5 phosphorylates p35 and induces its ubiquitination and subsequent degradation. Ubiquitinated by the CRL2(FEM1B) complex, which recognizes the -Gly-Leu-Asp-Arg C-degron at the C-terminus, leading to its degradation. In terms of tissue distribution, brain and neuron specific.

Its subcellular location is the cell membrane. The protein localises to the cell projection. It is found in the neuron projection. It localises to the nucleus. The protein resides in the cytoplasm. Its subcellular location is the perinuclear region. The protein localises to the perikaryon. Functionally, p35 is a neuron specific activator of CDK5. The complex p35/CDK5 is required for neurite outgrowth and cortical lamination. Involved in dendritic spine morphogenesis by mediating the EFNA1-EPHA4 signaling. Activator of TPKII. The complex p35/CDK5 participates in the regulation of the circadian clock by modulating the function of CLOCK protein: phosphorylates CLOCK at 'Thr-451' and 'Thr-461' and regulates the transcriptional activity of the CLOCK-BMAL1 heterodimer in association with altered stability and subcellular distribution. This chain is Cyclin-dependent kinase 5 activator 1 (CDK5R1), found in Bos taurus (Bovine).